We begin with the raw amino-acid sequence, 516 residues long: Flagellar radial spoke protein 3 (516 aa).

Polar residues-rich tracts occupy residues 1–11 (MVQAKAQQQLY) and 62–74 (ATQTQTKGPSPAS). Disordered stretches follow at residues 1-32 (MVQAKAQQQLYTHAAEPKAVQQRRAKYREDET), 60-90 (ADATQTQTKGPSPASTKKRTTRTLPPRTPEA), 388-412 (NAKWEADKAEAAEKARAEAEAAAEE), and 424-447 (AAAEAEERGEEPPAEPPSLPDGVE). The span at 391–412 (WEADKAEAAEKARAEAEAAAEE) shows a compositional bias: basic and acidic residues.

This sequence belongs to the flagellar radial spoke RSP3 family. In terms of assembly, interacts with FAP91. In terms of processing, protein 3 is one of the 5 radial spoke proteins that are phosphorylated. Protein 3a might only differ from protein 3 in being unphosphorylated.

The protein localises to the cytoplasm. The protein resides in the cytoskeleton. Its subcellular location is the flagellum axoneme. Its function is as follows. Protein 3 may attach the radial spoke to the outer doublet microtubule or is required to form a stable spoke structure. In terms of biological role, flagellar radial spokes contribute to the regulation of dynein arm activity and thus the pattern of flagellar bending. They consist of a thin stalk, which is attached to the a subfiber of the outer doublet microtubule, and a bulbous head, which is attached to the stalk and appears to interact with the projections from the central pair of microtubules. This Chlamydomonas reinhardtii (Chlamydomonas smithii) protein is Flagellar radial spoke protein 3.